Here is a 210-residue protein sequence, read N- to C-terminus: MAVLGSPLLPLRLFLCFGLLFFSASCTDHPDQCMIFNKVTSIHNSRIQVNPKVYESNTVYTVSVPVNNTISSVVMKAVDMHHSVIGFWQKADMNCTSSALYHVKSPHEHVLEAKWLSPASTNINTVELQVFVVDFHKEATASVLKLEKSGTSPALITKLITTKSNTVTTTKPTVITTHTTHKNSANRVFRSPVRDAIQILLAFLTSKLLF.

Positions 1–26 (MAVLGSPLLPLRLFLCFGLLFFSASC) are cleaved as a signal peptide. Over 27–189 (TDHPDQCMIF…THKNSANRVF (163 aa)) the chain is Extracellular. N67 and N94 each carry an N-linked (GlcNAc...) asparagine glycan. The helical transmembrane segment at 190–209 (RSPVRDAIQILLAFLTSKLL) threads the bilayer. Residue F210 is a topological domain, cytoplasmic.

In terms of tissue distribution, highly expressed in placenta.

The protein resides in the membrane. It is found in the apical cell membrane. Functionally, modulates leading keratinocyte migration and cellular adhesion to matrix proteins during a wound-healing response and promotes wound repair. May play a role during trichilemmal differentiation of the hair follicle. In Sus scrofa (Pig), this protein is Placenta-expressed transcript 1 protein (PLET1).